Consider the following 177-residue polypeptide: uncharacterized protein (177 aa).

The protein to M.jannaschii MJ0628.

This is an uncharacterized protein from Methanocaldococcus jannaschii (strain ATCC 43067 / DSM 2661 / JAL-1 / JCM 10045 / NBRC 100440) (Methanococcus jannaschii).